Reading from the N-terminus, the 373-residue chain is 3-isopropylmalate dehydrogenase gloI (373 aa).

Positions 92, 98, and 108 each coordinate substrate. Positions 228, 253, and 257 each coordinate Mg(2+). Residues 294–300 (HGSAPDI) and N307 each bind NADP(+).

It belongs to the isocitrate and isopropylmalate dehydrogenases family. As to quaternary structure, homodimer. The cofactor is Mg(2+). Requires Mn(2+) as cofactor.

It carries out the reaction (2R,3S)-3-isopropylmalate + NAD(+) = 4-methyl-2-oxopentanoate + CO2 + NADH. It participates in mycotoxin biosynthesis. In terms of biological role, 3-isopropylmalate dehydrogenase; part of the gene cluster that mediates the biosynthesis of pneumocandins, lipohexapeptides of the echinocandin family that prevent fungal cell wall formation by non-competitive inhibition of beta-1,3-glucan synthase. The 10,12-dimethylmyristoyl side chain is synthesized by the reducing polyketide synthase gloL/GLPKS4. The thioesterase gloN/GLHYD exclusively interacts with gloL/GLPKS4 to maintain turnover of the polyketide side chain. The 10R,12S-dimethylmyristic acid is then transferred to the first thiolation domain of the nonribosomal peptide synthetase gloA/GLNRPS4 by the acyl-AMP ligase gloD/GLligase, followed by its acylation to L-ornithine to trigger elongation of the cyclic hexapeptide. L-ornithine, 4R-hydroxyl-L-proline (generated from L-proline by the dioxygenase gloF/GLOXY2), 3S-hydroxyl-L-homotyrosine (generated by gloG/GLHtyB, gloH/GLHtyA, gloI/GLHtyC, gloJ/GLHtyD and hydroxylated at C-3 by the dioxygenase gloM/GLOXY1), 3R-hydroxyl-L-glutamine (generated from L-glutamine probably by the dioxygenase gloE/GLOXY3) and 3S-hydroxyl-L-proline (generated from L-proline by the dioxygenase gloF/GLOXY2 to yield pneumocandin B0), or 3S-hydroxyl-4S-methyl-L-proline (generated from L-leucine by the dioxygenase gloC/GLOXY4 to yield pneumocandin A0) are sequentially added to the growing chain. The last C domain of gloA/GLNRPS4 is proposed to be responsible for cyclization by condensation to form the peptide bond between L-ornithine and 3S-hydroxyl-4S-methyl-L-proline (for pneumocandin A0) or 3S-hydroxyl-L-proline (for pneumocandin B0). Finally, the subsequent C-4 hydroxylation of 3S-hydroxyl-L-homotyrosine and L-ornithine dihydroxylation at C-4 and C-5 are performed by the cytochrome P450 monooxygenases gloP/GLP450-1 and gloO/GLP450-2, respectively. The sequence is that of 3-isopropylmalate dehydrogenase gloI from Glarea lozoyensis (strain ATCC 20868 / MF5171).